Consider the following 516-residue polypeptide: Phosphatidylserine decarboxylase proenzyme 2, mitochondrial (516 aa).

A mitochondrion-targeting transit peptide spans Met1–Gly21. Topologically, residues Phe22–Ala33 are mitochondrial matrix. The chain crosses the membrane as a helical span at residues Leu34–Ile52. Residues His53 to Leu516 are Mitochondrial intermembrane-facing. Active-site charge relay system; for autoendoproteolytic cleavage activity residues include Asp159, His373, and Ser488. The active-site Schiff-base intermediate with substrate; via pyruvic acid; for decarboxylase activity is Ser488. Pyruvic acid (Ser); by autocatalysis is present on Ser488.

The protein belongs to the phosphatidylserine decarboxylase family. PSD-B subfamily. Eukaryotic type I sub-subfamily. In terms of assembly, heterodimer of a large membrane-associated beta subunit and a small pyruvoyl-containing alpha subunit. Requires pyruvate as cofactor. In terms of processing, is synthesized initially as an inactive proenzyme. Formation of the active enzyme involves a self-maturation process in which the active site pyruvoyl group is generated from an internal serine residue via an autocatalytic post-translational modification. Two non-identical subunits are generated from the proenzyme in this reaction, and the pyruvate is formed at the N-terminus of the alpha chain, which is derived from the carboxyl end of the proenzyme. The autoendoproteolytic cleavage occurs by a canonical serine protease mechanism, in which the side chain hydroxyl group of the serine supplies its oxygen atom to form the C-terminus of the beta chain, while the remainder of the serine residue undergoes an oxidative deamination to produce ammonia and the pyruvoyl prosthetic group on the alpha chain. During this reaction, the Ser that is part of the protease active site of the proenzyme becomes the pyruvoyl prosthetic group, which constitutes an essential element of the active site of the mature decarboxylase.

It localises to the mitochondrion. Its subcellular location is the mitochondrion inner membrane. The protein resides in the nucleus envelope. It is found in the lipid droplet. The protein localises to the endoplasmic reticulum membrane. It catalyses the reaction a 1,2-diacyl-sn-glycero-3-phospho-L-serine + H(+) = a 1,2-diacyl-sn-glycero-3-phosphoethanolamine + CO2. Its pathway is phospholipid metabolism; phosphatidylethanolamine biosynthesis; phosphatidylethanolamine from CDP-diacylglycerol: step 2/2. Functionally, catalyzes the formation of phosphatidylethanolamine (PtdEtn) from phosphatidylserine (PtdSer). Plays a central role in phospholipid metabolism and in the interorganelle trafficking of phosphatidylserine. Together with psd1 and psd3, responsible for the majority of phosphatidylethanolamine synthesis. Plays a role in lipid droplet biogenesis at the endoplasmic reticulum membrane. This chain is Phosphatidylserine decarboxylase proenzyme 2, mitochondrial, found in Schizosaccharomyces pombe (strain 972 / ATCC 24843) (Fission yeast).